We begin with the raw amino-acid sequence, 354 residues long: Methionine import ATP-binding protein MetN 2 (354 aa).

Residues 6 to 250 (IELKNISVHF…PQKPLTKEFI (245 aa)) enclose the ABC transporter domain. 42–49 (GYSGAGKS) contacts ATP.

Belongs to the ABC transporter superfamily. Methionine importer (TC 3.A.1.24) family. As to quaternary structure, the complex is composed of two ATP-binding proteins (MetN), two transmembrane proteins (MetI) and a solute-binding protein (MetQ).

The protein localises to the cell membrane. The enzyme catalyses L-methionine(out) + ATP + H2O = L-methionine(in) + ADP + phosphate + H(+). The catalysed reaction is D-methionine(out) + ATP + H2O = D-methionine(in) + ADP + phosphate + H(+). Part of the ABC transporter complex MetNIQ involved in methionine import. Responsible for energy coupling to the transport system. The sequence is that of Methionine import ATP-binding protein MetN 2 from Oenococcus oeni (strain ATCC BAA-331 / PSU-1).